A 263-amino-acid polypeptide reads, in one-letter code: ATP synthase subunit b 2 (263 aa).

A helical transmembrane segment spans residues 2–22 (LIDPLTVVAQIINFLILVALL).

It belongs to the ATPase B chain family. As to quaternary structure, F-type ATPases have 2 components, F(1) - the catalytic core - and F(0) - the membrane proton channel. F(1) has five subunits: alpha(3), beta(3), gamma(1), delta(1), epsilon(1). F(0) has four main subunits: a(1), b(1), b'(1) and c(10-14). The alpha and beta chains form an alternating ring which encloses part of the gamma chain. F(1) is attached to F(0) by a central stalk formed by the gamma and epsilon chains, while a peripheral stalk is formed by the delta, b and b' chains.

It localises to the cellular thylakoid membrane. Functionally, f(1)F(0) ATP synthase produces ATP from ADP in the presence of a proton or sodium gradient. F-type ATPases consist of two structural domains, F(1) containing the extramembraneous catalytic core and F(0) containing the membrane proton channel, linked together by a central stalk and a peripheral stalk. During catalysis, ATP synthesis in the catalytic domain of F(1) is coupled via a rotary mechanism of the central stalk subunits to proton translocation. In terms of biological role, component of the F(0) channel, it forms part of the peripheral stalk, linking F(1) to F(0). The chain is ATP synthase subunit b 2 from Acaryochloris marina (strain MBIC 11017).